A 317-amino-acid chain; its full sequence is 17-beta-hydroxysteroid dehydrogenase type 6 (317 aa).

The first 17 residues, 1-17 (MWLYLAVLLGLYYLLRW), serve as a signal peptide directing secretion. 33 to 57 (FITGCDSGFGNQLARQLDLRGLRVL) lines the NAD(+) pocket. N-linked (GlcNAc...) asparagine glycosylation is found at N71 and N161. A substrate-binding site is contributed by S164. Y176 (proton acceptor) is an active-site residue.

Belongs to the short-chain dehydrogenases/reductases (SDR) family.

The protein resides in the microsome membrane. Its subcellular location is the endoplasmic reticulum membrane. It carries out the reaction all-trans-retinol--[retinol-binding protein] + NAD(+) = all-trans-retinal--[retinol-binding protein] + NADH + H(+). The enzyme catalyses all-trans-retinol + NAD(+) = all-trans-retinal + NADH + H(+). The catalysed reaction is androsterone + NAD(+) = 5alpha-androstan-3,17-dione + NADH + H(+). It catalyses the reaction testosterone + NAD(+) = androst-4-ene-3,17-dione + NADH + H(+). It carries out the reaction 5alpha-androstane-3alpha,17beta-diol + NAD(+) = 17beta-hydroxy-5alpha-androstan-3-one + NADH + H(+). The enzyme catalyses 17beta-estradiol + NAD(+) = estrone + NADH + H(+). The catalysed reaction is 17beta-estradiol + NADP(+) = estrone + NADPH + H(+). It catalyses the reaction 3alpha-hydroxy-5alpha-pregnan-20-one + NAD(+) = 5alpha-pregnane-3,20-dione + NADH + H(+). It carries out the reaction 5alpha-androstane-3beta,17beta-diol + NAD(+) = 17beta-hydroxy-5alpha-androstan-3-one + NADH + H(+). The enzyme catalyses 3beta-hydroxy-5alpha-androstan-17-one + NAD(+) = 5alpha-androstan-3,17-dione + NADH + H(+). Its function is as follows. NAD-dependent oxidoreductase with broad substrate specificity that shows both oxidative and reductive activity (in vitro). Has 17-beta-hydroxysteroid dehydrogenase activity towards various steroids (in vitro). Converts 5-alpha-androstan-3-alpha,17-beta-diol to androsterone and estradiol to estrone (in vitro). Has 3-alpha-hydroxysteroid dehydrogenase activity towards androsterone (in vitro). Has retinol dehydrogenase activity towards all-trans-retinol (in vitro). Can convert androsterone to epi-androsterone. Androsterone is first oxidized to 5-alpha-androstane-3,17-dione and then reduced to epi-andosterone. Can act on both C-19 and C-21 3-alpha-hydroxysteroids. The protein is 17-beta-hydroxysteroid dehydrogenase type 6 (HSD17B6) of Bos taurus (Bovine).